The following is a 92-amino-acid chain: MKCDARYAEKYRMRPISDELGMEIDGYLGVIRKVTPELYDVFVLTYIKRWEKQGIWRYLHISRREYFNRLKTVKTSLLLLLSTEGKQYLFIA.

This is an uncharacterized protein from Haemophilus influenzae (strain ATCC 51907 / DSM 11121 / KW20 / Rd).